Consider the following 329-residue polypeptide: Epoxide hydrolase (329 aa).

Positions 35–308 (PAVLFCHGFP…DNVGHWVQHE (274 aa)) constitute an AB hydrolase-1 domain. Asp111 (nucleophile) is an active-site residue. Tyr242 functions as the Proton donor in the catalytic mechanism. His303 acts as the Proton acceptor in catalysis.

It belongs to the AB hydrolase superfamily. Epoxide hydrolase family. In terms of assembly, homodimer.

It catalyses the reaction an epoxide + H2O = an ethanediol. The catalysed reaction is (R)-styrene oxide + H2O = (R)-styrene glycol. It carries out the reaction (S)-styrene oxide + H2O = (S)-styrene glycol. The enzyme catalyses 3,4-epoxy-1-cyclohexene + H2O = cyclohex-3-ene-1,2-diol. Its function is as follows. Catalyzes the hydrolysis of various epoxides into diols. In vitro, shows the strongest activity toward aromatic and cyclic aliphatic epoxide compounds, since it shows strong activity toward (R)-styrene oxide, (S)-styrene oxide, and 3,4-epoxy-1-cyclohexene, but very weak activity toward (R)-epichlorohydrin, (S)-epichlorohydrin, and 1,2-epoxy-9-decene. The chain is Epoxide hydrolase from Caballeronia sordidicola (Burkholderia sordidicola).